The following is a 351-amino-acid chain: Photosystem II D2 protein (351 aa).

The helical transmembrane segment at 39-59 (TAYLAAGGWFTGTTFVTSWYT) threads the bilayer. His116 is a binding site for chlorophyll a. The chain crosses the membrane as a helical span at residues 123-139 (GFCLRQFEIARLVGIRP). 2 residues coordinate pheophytin a: Gln128 and Asn141. The helical transmembrane segment at 151-164 (VFVSVFLLYPLGQA) threads the bilayer. Residue His196 coordinates chlorophyll a. The chain crosses the membrane as a helical span at residues 206–226 (GALLCAIHGATVENTLFEDGD). Positions 213 and 260 each coordinate a plastoquinone. His213 lines the Fe cation pocket. Residue His267 participates in Fe cation binding. Residues 277 to 293 (GLWTSSIGIVGLALNLR) form a helical membrane-spanning segment.

Belongs to the reaction center PufL/M/PsbA/D family. PSII is composed of 1 copy each of membrane proteins PsbA, PsbB, PsbC, PsbD, PsbE, PsbF, PsbH, PsbI, PsbJ, PsbK, PsbL, PsbM, PsbT, PsbX, PsbY, PsbZ, Psb30/Ycf12, at least 3 peripheral proteins of the oxygen-evolving complex and a large number of cofactors. It forms dimeric complexes. The D1/D2 heterodimer binds P680, chlorophylls that are the primary electron donor of PSII, and subsequent electron acceptors. It shares a non-heme iron and each subunit binds pheophytin, quinone, additional chlorophylls, carotenoids and lipids. There is also a Cl(-1) ion associated with D1 and D2, which is required for oxygen evolution. The PSII complex binds additional chlorophylls, carotenoids and specific lipids. serves as cofactor.

It localises to the plastid. The protein localises to the chloroplast thylakoid membrane. The catalysed reaction is 2 a plastoquinone + 4 hnu + 2 H2O = 2 a plastoquinol + O2. In terms of biological role, photosystem II (PSII) is a light-driven water:plastoquinone oxidoreductase that uses light energy to abstract electrons from H(2)O, generating O(2) and a proton gradient subsequently used for ATP formation. It consists of a core antenna complex that captures photons, and an electron transfer chain that converts photonic excitation into a charge separation. The D1/D2 (PsbA/PsbD) reaction center heterodimer binds P680, the primary electron donor of PSII as well as several subsequent electron acceptors. D2 is needed for assembly of a stable PSII complex. This is Photosystem II D2 protein from Thalassiosira pseudonana (Marine diatom).